The primary structure comprises 1556 residues: uncharacterized protein (1556 aa).

Ser-2 carries the N-acetylserine modification. Residues 145 to 156 (NQLENRKSLERK) show a composition bias toward basic and acidic residues. The segment at 145 to 170 (NQLENRKSLERKPSRKRRKKNSNVND) is disordered. A Helicase ATP-binding domain is found at 378-583 (SGDYPVCAKG…MIMSYLKLHP (206 aa)). Residue 391-398 (EEMGLGKT) participates in ATP binding. The residue at position 810 (Ser-810) is a Phosphoserine. The interval 810-850 (SEDEDEHMDERFGEKETSSGDESDREINGAKNHDNHNNDGM) is disordered. Composition is skewed to basic and acidic residues over residues 817 to 827 (MDERFGEKETS) and 834 to 846 (REINGAKNHDNHN). The RING-type zinc finger occupies 1239 to 1277 (CSICLGEVEIGAIIKCGHYFCKSCILTWLRAHSKCPICK). Over residues 1297–1309 (REKEIQEPRREGA) the composition is skewed to basic and acidic residues. Disordered regions lie at residues 1297 to 1319 (REKEIQEPRREGADSSQDNSNEN) and 1508 to 1534 (EKSKKGDKYDEAQDETDNEESDDAKFE). A compositionally biased stretch (low complexity) spans 1310 to 1319 (DSSQDNSNEN). The region spanning 1363–1531 (KLISYLRLKS…ETDNEESDDA (169 aa)) is the Helicase C-terminal domain. The segment covering 1508 to 1518 (EKSKKGDKYDE) has biased composition (basic and acidic residues). The span at 1519 to 1529 (AQDETDNEESD) shows a compositional bias: acidic residues.

This sequence belongs to the SNF2/RAD54 helicase family.

Its subcellular location is the nucleus. Is probably involved in a pathway contributing to genomic integrity. This is an uncharacterized protein from Saccharomyces cerevisiae (strain ATCC 204508 / S288c) (Baker's yeast).